The primary structure comprises 937 residues: Isoleucine--tRNA ligase (937 aa).

The 'HIGH' region motif lies at Pro-58 to His-68. Glu-561 contacts L-isoleucyl-5'-AMP. A 'KMSKS' region motif is present at residues Lys-602 to Ser-606. Position 605 (Lys-605) interacts with ATP. Cys-900, Cys-903, Cys-920, and Cys-923 together coordinate Zn(2+).

Belongs to the class-I aminoacyl-tRNA synthetase family. IleS type 1 subfamily. As to quaternary structure, monomer. Requires Zn(2+) as cofactor.

The protein localises to the cytoplasm. It catalyses the reaction tRNA(Ile) + L-isoleucine + ATP = L-isoleucyl-tRNA(Ile) + AMP + diphosphate. In terms of biological role, catalyzes the attachment of isoleucine to tRNA(Ile). As IleRS can inadvertently accommodate and process structurally similar amino acids such as valine, to avoid such errors it has two additional distinct tRNA(Ile)-dependent editing activities. One activity is designated as 'pretransfer' editing and involves the hydrolysis of activated Val-AMP. The other activity is designated 'posttransfer' editing and involves deacylation of mischarged Val-tRNA(Ile). The sequence is that of Isoleucine--tRNA ligase from Photorhabdus laumondii subsp. laumondii (strain DSM 15139 / CIP 105565 / TT01) (Photorhabdus luminescens subsp. laumondii).